A 365-amino-acid chain; its full sequence is Phospho-N-acetylmuramoyl-pentapeptide-transferase (365 aa).

10 helical membrane-spanning segments follow: residues 3 to 23 (HIII…PILI), 54 to 74 (GIAI…ASVF), 81 to 101 (PTAS…LGFL), 119 to 139 (GKLL…LLFL), 162 to 182 (IAIG…YILV), 198 to 218 (LAAG…FWQF), 239 to 259 (LSIL…WNAA), 263 to 283 (IFMG…LSVT), 289 to 309 (LMIV…IQVV), and 342 to 362 (FWLL…ADWL).

It belongs to the glycosyltransferase 4 family. MraY subfamily. The cofactor is Mg(2+).

The protein localises to the cell membrane. The catalysed reaction is UDP-N-acetyl-alpha-D-muramoyl-L-alanyl-gamma-D-glutamyl-meso-2,6-diaminopimeloyl-D-alanyl-D-alanine + di-trans,octa-cis-undecaprenyl phosphate = di-trans,octa-cis-undecaprenyl diphospho-N-acetyl-alpha-D-muramoyl-L-alanyl-D-glutamyl-meso-2,6-diaminopimeloyl-D-alanyl-D-alanine + UMP. It functions in the pathway cell wall biogenesis; peptidoglycan biosynthesis. Its function is as follows. Catalyzes the initial step of the lipid cycle reactions in the biosynthesis of the cell wall peptidoglycan: transfers peptidoglycan precursor phospho-MurNAc-pentapeptide from UDP-MurNAc-pentapeptide onto the lipid carrier undecaprenyl phosphate, yielding undecaprenyl-pyrophosphoryl-MurNAc-pentapeptide, known as lipid I. The polypeptide is Phospho-N-acetylmuramoyl-pentapeptide-transferase (Corynebacterium kroppenstedtii (strain DSM 44385 / JCM 11950 / CIP 105744 / CCUG 35717)).